A 401-amino-acid chain; its full sequence is MNKWLCCALLVLLDIIEWTTQETLPPKYLHYDPETGHQLLCDKCAPGTYLKQHCTVRRKTLCVPCPDHSYTDSWHTSDECVYCSPVCKELQSVKQECNRTHNRVCECEEGRYLEIEFCLKHRSCPPGSGVVQAGTPERNTVCKKCPDGFFSGETSSKAPCIKHTNCSTFGLLLIQKGNATHDNVCSGNREATQKCGIDVTLCEEAFFRFAVPTKIIPNWLSVLVDSLPGTKVNAESVERIKRRHSSQEQTFQLLKLWKHQNRDQEMVKKIIQDIDLCESSVQRHLGHSNLTTEQLLALMESLPGKKISPEEIERTRKTCKSSEQLLKLLSLWRIKNGDQDTLKGLMYALKHLKTSHFPKTVTHSLRKTMRFLHSFTMYRLYQKLFLEMIGNQVQSVKISCL.

An N-terminal signal peptide occupies residues 1–21 (MNKWLCCALLVLLDIIEWTTQ). TNFR-Cys repeat units lie at residues 24–62 (LPPK…KTLC), 65–105 (CPDH…NRVC), 107–142 (CEEG…NTVC), and 145–185 (CPDG…DNVC). 8 disulfides stabilise this stretch: Cys-41–Cys-54, Cys-44–Cys-62, Cys-65–Cys-80, Cys-83–Cys-97, Cys-87–Cys-105, Cys-107–Cys-118, Cys-124–Cys-142, and Cys-145–Cys-160. Asn-98 carries an N-linked (GlcNAc...) asparagine glycan. 2 N-linked (GlcNAc...) asparagine glycosylation sites follow: Asn-165 and Asn-178. Cys-166 and Cys-185 are disulfide-bonded. Death domains lie at 198–269 (DVTL…MVKK) and 283–365 (RHLG…THSL). A glycan (N-linked (GlcNAc...) asparagine) is linked at Asn-289.

Homodimer. Interacts with TNFSF10 and TNFSF11. In terms of tissue distribution, highly expressed in liver, lung, stomach, intestines and calvaria. Highly expressed in decidua and placenta, and in embryo.

The protein localises to the secreted. Functionally, acts as a decoy receptor for TNFSF11/RANKL and thereby neutralizes its function in osteoclastogenesis. Inhibits the activation of osteoclasts and promotes osteoclast apoptosis in vitro. Bone homeostasis seems to depend on the local ratio between TNFSF11 and TNFRSF11B. May also play a role in preventing arterial calcification. May act as decoy receptor for TNFSF10/TRAIL and protect against apoptosis. TNFSF10/TRAIL binding blocks the inhibition of osteoclastogenesis. This is Tumor necrosis factor receptor superfamily member 11B (Tnfrsf11b) from Mus musculus (Mouse).